The chain runs to 599 residues: Leucine zipper putative tumor suppressor 1 (599 aa).

The N-myristoyl glycine moiety is linked to residue Gly2. 2 disordered regions span residues Gly135–Ser190 and Glu288–Arg324. Residues Pro153–Leu162 are compositionally biased toward basic and acidic residues. Residues Ser174 to Ser190 are compositionally biased toward polar residues. The stretch at Leu256–Arg572 forms a coiled coil. The segment covering Glu288–Ser313 has biased composition (basic and acidic residues).

The protein belongs to the LZTS family. Binds EEF1G, TLK2 and CDK1. In terms of processing, phosphorylated on serine residues. Hyperphosphorylated by the cAMP-dependent kinase PKA during cell-cycle progression.

The protein localises to the cytoplasm. The protein resides in the cell membrane. It is found in the cell projection. It localises to the dendritic spine. Its subcellular location is the postsynaptic density. The protein localises to the synapse. Functionally, involved in the regulation of cell growth. May stabilize the active CDC2-cyclin B1 complex and thereby contribute to the regulation of the cell cycle and the prevention of uncontrolled cell proliferation. May act as tumor suppressor. The protein is Leucine zipper putative tumor suppressor 1 (Lzts1) of Mus musculus (Mouse).